The primary structure comprises 161 residues: Probable ubiquitin-conjugating enzyme E2 17 (161 aa).

A UBC core domain is found at 15–161; that stretch reads IATNRLQKEF…TRWRFHDDKV (147 aa). Cys-99 serves as the catalytic Glycyl thioester intermediate.

It belongs to the ubiquitin-conjugating enzyme family.

It carries out the reaction S-ubiquitinyl-[E1 ubiquitin-activating enzyme]-L-cysteine + [E2 ubiquitin-conjugating enzyme]-L-cysteine = [E1 ubiquitin-activating enzyme]-L-cysteine + S-ubiquitinyl-[E2 ubiquitin-conjugating enzyme]-L-cysteine.. Its pathway is protein modification; protein ubiquitination. Accepts the ubiquitin from the E1 complex and catalyzes its covalent attachment to other proteins. In Arabidopsis thaliana (Mouse-ear cress), this protein is Probable ubiquitin-conjugating enzyme E2 17 (UBC17).